Reading from the N-terminus, the 392-residue chain is Zinc transporter zipt-7.1 (392 aa).

Residue Asn-63 is glycosylated (N-linked (GlcNAc...) asparagine). Transmembrane regions (helical) follow at residues 82-102 (VFSLSAVIGISLAPCTLLFFI) and 114-134 (ILLAFGAGGLLGDALLHIIPH). The segment at 139-162 (HSHGAHDHDHAHSHDHAHNDHSHD) is disordered. The segment covering 142–162 (GAHDHDHAHSHDHAHNDHSHD) has biased composition (basic and acidic residues). The helical transmembrane segment at 170 to 190 (GIYVIAGILVFMMVEQLVRII) threads the bilayer. Asn-248 carries an N-linked (GlcNAc...) asparagine glycan. The next 3 membrane-spanning stretches (helical) occupy residues 255–275 (IGASFSAGSTLGWVTTLTVLL), 304–324 (VTALGAITGCIFSLLISNPVL), and 331–351 (GAIMPFTAGGFIYIATVSVIP). N-linked (GlcNAc...) asparagine glycosylation is present at Asn-361. A helical transmembrane segment spans residues 371–391 (SLVHLIAICMGVGMMYIVSLV).

This sequence belongs to the ZIP transporter (TC 2.A.5) family. KE4/Catsup subfamily.

The protein localises to the membrane. Zinc transporter which regulates intracellular zinc levels. Required for spermatogenesis in both hermaphrodites and males where it resides in an inactive form in immature sperm, spermatids, but is likely activated in response to reduced spe-4 and spe-6 function. Upon activation, mediates the release of zinc from internal stores in spermatids into the cytoplasm. The resulting increase in cytoplasmic zinc levels promotes spermatid activation and subsequent differentiation into mature motile sperm that are capable of fertilization. This Caenorhabditis briggsae protein is Zinc transporter zipt-7.1.